Here is a 227-residue protein sequence, read N- to C-terminus: Phosphoribosylformylglycinamidine synthase subunit PurQ (227 aa).

The Glutamine amidotransferase type-1 domain maps to 3–227 (FAVIVFPGSN…NWRESHVTAS (225 aa)). The active-site Nucleophile is the Cys86. Active-site residues include His194 and Glu196.

Part of the FGAM synthase complex composed of 1 PurL, 1 PurQ and 2 PurS subunits.

The protein resides in the cytoplasm. The enzyme catalyses N(2)-formyl-N(1)-(5-phospho-beta-D-ribosyl)glycinamide + L-glutamine + ATP + H2O = 2-formamido-N(1)-(5-O-phospho-beta-D-ribosyl)acetamidine + L-glutamate + ADP + phosphate + H(+). It carries out the reaction L-glutamine + H2O = L-glutamate + NH4(+). Its pathway is purine metabolism; IMP biosynthesis via de novo pathway; 5-amino-1-(5-phospho-D-ribosyl)imidazole from N(2)-formyl-N(1)-(5-phospho-D-ribosyl)glycinamide: step 1/2. In terms of biological role, part of the phosphoribosylformylglycinamidine synthase complex involved in the purines biosynthetic pathway. Catalyzes the ATP-dependent conversion of formylglycinamide ribonucleotide (FGAR) and glutamine to yield formylglycinamidine ribonucleotide (FGAM) and glutamate. The FGAM synthase complex is composed of three subunits. PurQ produces an ammonia molecule by converting glutamine to glutamate. PurL transfers the ammonia molecule to FGAR to form FGAM in an ATP-dependent manner. PurS interacts with PurQ and PurL and is thought to assist in the transfer of the ammonia molecule from PurQ to PurL. In Shouchella clausii (strain KSM-K16) (Alkalihalobacillus clausii), this protein is Phosphoribosylformylglycinamidine synthase subunit PurQ.